Here is a 472-residue protein sequence, read N- to C-terminus: 23S rRNA (uracil(1939)-C(5))-methyltransferase RlmD (472 aa).

Residues 1–15 (MSRTAPHRRAPKRYK) are compositionally biased toward basic residues. A disordered region spans residues 1 to 23 (MSRTAPHRRAPKRYKTPPPAPAH). Residues 23–87 (HVVTGNEPVI…PKFEQAEVVQ (65 aa)) form the TRAM domain. [4Fe-4S] cluster is bound by residues Cys100, Cys106, Cys109, and Cys188. Positions 296, 325, 330, 346, 374, and 395 each coordinate S-adenosyl-L-methionine. Cys428 serves as the catalytic Nucleophile.

It belongs to the class I-like SAM-binding methyltransferase superfamily. RNA M5U methyltransferase family. RlmD subfamily.

It carries out the reaction uridine(1939) in 23S rRNA + S-adenosyl-L-methionine = 5-methyluridine(1939) in 23S rRNA + S-adenosyl-L-homocysteine + H(+). In terms of biological role, catalyzes the formation of 5-methyl-uridine at position 1939 (m5U1939) in 23S rRNA. The protein is 23S rRNA (uracil(1939)-C(5))-methyltransferase RlmD of Paraburkholderia xenovorans (strain LB400).